The chain runs to 101 residues: MAKKSKIAKNEQRKIVVARWAERRTELKETIRRPSSSEDERAEARAALQRLPRDASPVRLRNRDAADGRPRGHLRKFGLSRVRVREMAHRGELPGVHKSSW.

Composition is skewed to basic and acidic residues over residues 28–44 and 61–70; these read KETIRRPSSSEDERAEA and RNRDAADGRP. The segment at 28 to 74 is disordered; the sequence is KETIRRPSSSEDERAEARAALQRLPRDASPVRLRNRDAADGRPRGHL.

It belongs to the universal ribosomal protein uS14 family. Part of the 30S ribosomal subunit. Contacts proteins S3 and S10.

Its function is as follows. Binds 16S rRNA, required for the assembly of 30S particles and may also be responsible for determining the conformation of the 16S rRNA at the A site. This chain is Small ribosomal subunit protein uS14A, found in Rhodococcus jostii (strain RHA1).